Here is a 310-residue protein sequence, read N- to C-terminus: GTPase Era (310 aa).

Positions 17 to 184 constitute an Era-type G domain; it reads HSGFVALIGA…LDYLAQALPA (168 aa). The segment at 25-32 is G1; sequence GAPNAGKS. Residue 25 to 32 participates in GTP binding; it reads GAPNAGKS. Residues 51 to 55 form a G2 region; it reads QTTRA. Residues 72 to 75 form a G3 region; sequence DTPG. GTP contacts are provided by residues 72 to 76 and 134 to 137; these read DTPGI and NKVD. Positions 134 to 137 are G4; the sequence is NKVD. Residues 163–165 form a G5 region; sequence VSA. Residues 215–292 form the KH type-2 domain; it reads LHQELPYSSH…HLFLFVKVRE (78 aa).

This sequence belongs to the TRAFAC class TrmE-Era-EngA-EngB-Septin-like GTPase superfamily. Era GTPase family. As to quaternary structure, monomer.

It is found in the cytoplasm. It localises to the cell inner membrane. Functionally, an essential GTPase that binds both GDP and GTP, with rapid nucleotide exchange. Plays a role in 16S rRNA processing and 30S ribosomal subunit biogenesis and possibly also in cell cycle regulation and energy metabolism. The protein is GTPase Era of Mesorhizobium japonicum (strain LMG 29417 / CECT 9101 / MAFF 303099) (Mesorhizobium loti (strain MAFF 303099)).